A 167-amino-acid polypeptide reads, in one-letter code: Ribosome maturation factor RimM (167 aa).

One can recognise a PRC barrel domain in the interval 94–165 (ENEFYYSDII…KIIITPMEGL (72 aa)).

The protein belongs to the RimM family. As to quaternary structure, binds ribosomal protein uS19.

The protein resides in the cytoplasm. Functionally, an accessory protein needed during the final step in the assembly of 30S ribosomal subunit, possibly for assembly of the head region. Essential for efficient processing of 16S rRNA. May be needed both before and after RbfA during the maturation of 16S rRNA. It has affinity for free ribosomal 30S subunits but not for 70S ribosomes. This is Ribosome maturation factor RimM from Staphylococcus aureus (strain Mu3 / ATCC 700698).